A 185-amino-acid polypeptide reads, in one-letter code: Ribosome-recycling factor (185 aa).

The protein belongs to the RRF family.

The protein localises to the cytoplasm. Functionally, responsible for the release of ribosomes from messenger RNA at the termination of protein biosynthesis. May increase the efficiency of translation by recycling ribosomes from one round of translation to another. This is Ribosome-recycling factor from Nitrosomonas europaea (strain ATCC 19718 / CIP 103999 / KCTC 2705 / NBRC 14298).